The primary structure comprises 289 residues: Acetyl-coenzyme A carboxylase carboxyl transferase subunit beta (289 aa).

In terms of domain architecture, CoA carboxyltransferase N-terminal spans 28-289 (VMTKCPKCKK…QGGEMAVWQS (262 aa)). Positions 32, 35, 51, and 54 each coordinate Zn(2+). The C4-type zinc-finger motif lies at 32 to 54 (CPKCKKIMYTKELLKNLKVCVNC).

The protein belongs to the AccD/PCCB family. Acetyl-CoA carboxylase is a heterohexamer composed of biotin carboxyl carrier protein (AccB), biotin carboxylase (AccC) and two subunits each of ACCase subunit alpha (AccA) and ACCase subunit beta (AccD). The cofactor is Zn(2+).

It localises to the cytoplasm. It carries out the reaction N(6)-carboxybiotinyl-L-lysyl-[protein] + acetyl-CoA = N(6)-biotinyl-L-lysyl-[protein] + malonyl-CoA. The protein operates within lipid metabolism; malonyl-CoA biosynthesis; malonyl-CoA from acetyl-CoA: step 1/1. In terms of biological role, component of the acetyl coenzyme A carboxylase (ACC) complex. Biotin carboxylase (BC) catalyzes the carboxylation of biotin on its carrier protein (BCCP) and then the CO(2) group is transferred by the transcarboxylase to acetyl-CoA to form malonyl-CoA. This chain is Acetyl-coenzyme A carboxylase carboxyl transferase subunit beta, found in Bacillus cereus (strain ATCC 10987 / NRS 248).